The primary structure comprises 499 residues: Lanosterol 14-alpha demethylase (499 aa).

Residues 13 to 35 form a helical membrane-spanning segment; that stretch reads SAVLQMSLTSVLLTASVFTLTLG. A heme-binding site is contributed by cysteine 441.

This sequence belongs to the cytochrome P450 family. Heme is required as a cofactor. In terms of tissue distribution, strongly expressed in intestine. Moderately expressed in liver, with higher levels in females compared to males. Also detected at low levels in brain, eye, kidney and testis.

The protein resides in the endoplasmic reticulum membrane. The protein localises to the membrane. It carries out the reaction a 14alpha-methyl steroid + 3 reduced [NADPH--hemoprotein reductase] + 3 O2 = a Delta(14) steroid + formate + 3 oxidized [NADPH--hemoprotein reductase] + 4 H2O + 4 H(+). The enzyme catalyses lanosterol + 3 reduced [NADPH--hemoprotein reductase] + 3 O2 = 4,4-dimethyl-5alpha-cholesta-8,14,24-trien-3beta-ol + formate + 3 oxidized [NADPH--hemoprotein reductase] + 4 H2O + 4 H(+). The catalysed reaction is 24,25-dihydrolanosterol + 3 reduced [NADPH--hemoprotein reductase] + 3 O2 = 4,4-dimethyl-8,14-cholestadien-3beta-ol + formate + 3 oxidized [NADPH--hemoprotein reductase] + 4 H2O + 4 H(+). It catalyses the reaction a 14alpha-methyl steroid + reduced [NADPH--hemoprotein reductase] + O2 = a 14alpha-hydroxymethyl steroid + oxidized [NADPH--hemoprotein reductase] + H2O + H(+). It carries out the reaction a 14alpha-hydroxymethyl steroid + reduced [NADPH--hemoprotein reductase] + O2 = a 14alpha-formyl steroid + oxidized [NADPH--hemoprotein reductase] + 2 H2O + H(+). The enzyme catalyses a 14alpha-formyl steroid + reduced [NADPH--hemoprotein reductase] + O2 = a Delta(14) steroid + formate + oxidized [NADPH--hemoprotein reductase] + H2O + 2 H(+). The catalysed reaction is lanosterol + reduced [NADPH--hemoprotein reductase] + O2 = 32-hydroxylanosterol + oxidized [NADPH--hemoprotein reductase] + H2O + H(+). It catalyses the reaction 32-hydroxylanosterol + reduced [NADPH--hemoprotein reductase] + O2 = 32-oxolanosterol + oxidized [NADPH--hemoprotein reductase] + 2 H2O + H(+). It carries out the reaction 32-oxolanosterol + reduced [NADPH--hemoprotein reductase] + O2 = 4,4-dimethyl-5alpha-cholesta-8,14,24-trien-3beta-ol + formate + oxidized [NADPH--hemoprotein reductase] + H2O + 2 H(+). The enzyme catalyses 24,25-dihydrolanosterol + reduced [NADPH--hemoprotein reductase] + O2 = 32-hydroxy-24,25-dihydrolanosterol + oxidized [NADPH--hemoprotein reductase] + H2O + H(+). The catalysed reaction is 32-hydroxy-24,25-dihydrolanosterol + reduced [NADPH--hemoprotein reductase] + O2 = 32-oxo-24,25-dihydrolanosterol + oxidized [NADPH--hemoprotein reductase] + 2 H2O + H(+). It catalyses the reaction 32-oxo-24,25-dihydrolanosterol + reduced [NADPH--hemoprotein reductase] + O2 = 4,4-dimethyl-8,14-cholestadien-3beta-ol + formate + oxidized [NADPH--hemoprotein reductase] + H2O + 2 H(+). It participates in steroid biosynthesis; zymosterol biosynthesis; zymosterol from lanosterol: step 1/6. With respect to regulation, inhibited by ketoconazole. May also be inhibited to a lesser extent by propiconazole. Functionally, sterol 14alpha-demethylase that plays a critical role in the cholesterol biosynthesis pathway, being cholesterol the major sterol component in deuterostome membranes as well as a precursor for steroid hormone synthesis. Cytochrome P450 monooxygenase that catalyzes the three-step oxidative removal of the 14alpha-methyl group (C-32) of sterols such as lanosterol (lanosta-8,24-dien-3beta-ol) and 24,25-dihydrolanosterol (DHL) in the form of formate, and converts the sterols to 4,4-dimethyl-5alpha-cholesta-8,14,24-trien-3beta-ol and 4,4-dimethyl-8,14-cholestadien-3beta-ol, respectively, which are intermediates of cholesterol biosynthesis. Can also demethylate substrates not intrinsic to deuterostomes, such as eburicol (24-methylene-24,25-dihydrolanosterol), but at a lower rate than DHL. The sequence is that of Lanosterol 14-alpha demethylase from Danio rerio (Zebrafish).